A 290-amino-acid chain; its full sequence is MINVVSFSGGRTSAYLLWLMEQKRRAGKDVHYVFMDTGCEHPMTYRFVREVVKFWDIPLTVLQVDINPELGQPNGYTVWEPKDIQTRMPVLKPFIDMVKKYGTPYVGGAFCTDRLKLVPFTKYCDDHFGRGNYTTWIGIRADEPKRLKPKPGIRYLAELSDFEKEDILAWWKQQPFDLQIPEHLGNCIFCIKKSTQKIGLACKDEEGLQRVFNEVITGSHVRDGHRETPKEIMYRGRMSLDGIAKMYSENDYQALYQDMVRAKRFDTGSCSESCEIFGGQLDFDFGREAA.

This is an uncharacterized protein from Escherichia phage lambda (Bacteriophage lambda).